Reading from the N-terminus, the 319-residue chain is Protease HtpX homolog (319 aa).

2 helical membrane-spanning segments follow: residues 6–26 and 28–48; these read TAMLLAFMTVLFMAVGYVIGG and GGMMIALVIAAGMNFFSYWNS. Residue H130 coordinates Zn(2+). E131 is an active-site residue. A Zn(2+)-binding site is contributed by H134. 2 consecutive transmembrane segments (helical) span residues 145-165 and 172-192; these read LTATLAGAISMLGNFAFFFGG and PLGFIGVLIAMIVAPLAAMLV. Zn(2+) is bound at residue E201. The disordered stretch occupies residues 277–319; the sequence is MARETSTGSTAPVRPDNAGRKSRSVPRTGWGRGGSEPPKGPWS.

It belongs to the peptidase M48B family. The cofactor is Zn(2+).

It is found in the cell inner membrane. The protein is Protease HtpX homolog of Rhizobium meliloti (strain 1021) (Ensifer meliloti).